We begin with the raw amino-acid sequence, 500 residues long: NAD(P)H-quinone oxidoreductase chain 4, chloroplastic (500 aa).

The next 14 helical transmembrane spans lie at Phe-4–Leu-24, Ile-37–Leu-57, Leu-87–Ile-107, Leu-113–Ser-130, Leu-134–Met-154, Phe-167–Leu-187, Ile-211–His-231, His-242–Ile-262, Ala-272–Ala-292, Met-313–Leu-333, Gln-334–Asp-354, Leu-386–Thr-406, Leu-417–Leu-437, and Leu-462–Val-482.

This sequence belongs to the complex I subunit 4 family.

Its subcellular location is the plastid. The protein localises to the chloroplast thylakoid membrane. The catalysed reaction is a plastoquinone + NADH + (n+1) H(+)(in) = a plastoquinol + NAD(+) + n H(+)(out). It carries out the reaction a plastoquinone + NADPH + (n+1) H(+)(in) = a plastoquinol + NADP(+) + n H(+)(out). This is NAD(P)H-quinone oxidoreductase chain 4, chloroplastic (ndhD) from Triticum aestivum (Wheat).